We begin with the raw amino-acid sequence, 225 residues long: Ribosome maturation factor RimM (225 aa).

Residues 144-225 (ADEFYWVDLI…RIVVDWEADY (82 aa)) form the PRC barrel domain.

Belongs to the RimM family. As to quaternary structure, binds ribosomal protein uS19.

The protein resides in the cytoplasm. Its function is as follows. An accessory protein needed during the final step in the assembly of 30S ribosomal subunit, possibly for assembly of the head region. Essential for efficient processing of 16S rRNA. May be needed both before and after RbfA during the maturation of 16S rRNA. It has affinity for free ribosomal 30S subunits but not for 70S ribosomes. In Burkholderia ambifaria (strain MC40-6), this protein is Ribosome maturation factor RimM.